A 147-amino-acid chain; its full sequence is D-aminoacyl-tRNA deacylase (147 aa).

The Gly-cisPro motif, important for rejection of L-amino acids signature appears at 136–137 (GP).

This sequence belongs to the DTD family. In terms of assembly, homodimer.

Its subcellular location is the cytoplasm. It carries out the reaction glycyl-tRNA(Ala) + H2O = tRNA(Ala) + glycine + H(+). The catalysed reaction is a D-aminoacyl-tRNA + H2O = a tRNA + a D-alpha-amino acid + H(+). Functionally, an aminoacyl-tRNA editing enzyme that deacylates mischarged D-aminoacyl-tRNAs. Also deacylates mischarged glycyl-tRNA(Ala), protecting cells against glycine mischarging by AlaRS. Acts via tRNA-based rather than protein-based catalysis; rejects L-amino acids rather than detecting D-amino acids in the active site. By recycling D-aminoacyl-tRNA to D-amino acids and free tRNA molecules, this enzyme counteracts the toxicity associated with the formation of D-aminoacyl-tRNA entities in vivo and helps enforce protein L-homochirality. This is D-aminoacyl-tRNA deacylase from Streptococcus sanguinis (strain SK36).